Here is a 491-residue protein sequence, read N- to C-terminus: Argininosuccinate lyase (491 aa).

This sequence belongs to the lyase 1 family. Argininosuccinate lyase subfamily.

It is found in the cytoplasm. The catalysed reaction is 2-(N(omega)-L-arginino)succinate = fumarate + L-arginine. It functions in the pathway amino-acid biosynthesis; L-arginine biosynthesis; L-arginine from L-ornithine and carbamoyl phosphate: step 3/3. The protein is Argininosuccinate lyase of Methanosarcina mazei (strain ATCC BAA-159 / DSM 3647 / Goe1 / Go1 / JCM 11833 / OCM 88) (Methanosarcina frisia).